Here is a 358-residue protein sequence, read N- to C-terminus: Methionine import ATP-binding protein MetN (358 aa).

Positions 14-255 (VVFDAVSKRF…SRHETTRALL (242 aa)) constitute an ABC transporter domain. Residue 52–59 (GRSGAGKS) participates in ATP binding.

Belongs to the ABC transporter superfamily. Methionine importer (TC 3.A.1.24) family. In terms of assembly, the complex is composed of two ATP-binding proteins (MetN), two transmembrane proteins (MetI) and a solute-binding protein (MetQ).

The protein resides in the cell inner membrane. The enzyme catalyses L-methionine(out) + ATP + H2O = L-methionine(in) + ADP + phosphate + H(+). It catalyses the reaction D-methionine(out) + ATP + H2O = D-methionine(in) + ADP + phosphate + H(+). Its function is as follows. Part of the ABC transporter complex MetNIQ involved in methionine import. Responsible for energy coupling to the transport system. This Rhizobium meliloti (strain 1021) (Ensifer meliloti) protein is Methionine import ATP-binding protein MetN.